Consider the following 136-residue polypeptide: Ribonuclease VapC1 (136 aa).

A PINc domain is found at 18–129 (ILVDTSVLID…KKHFERLKEF (112 aa)). Mg(2+)-binding residues include D21 and D101.

The protein belongs to the PINc/VapC protein family. Mg(2+) serves as cofactor.

Functionally, toxic component of a type II toxin-antitoxin (TA) system. An RNase. Its cognate antitoxin is VapB1. In Methanocaldococcus jannaschii (strain ATCC 43067 / DSM 2661 / JAL-1 / JCM 10045 / NBRC 100440) (Methanococcus jannaschii), this protein is Ribonuclease VapC1.